Here is a 545-residue protein sequence, read N- to C-terminus: Phenylalanine--tRNA ligase beta subunit (545 aa).

Residues 268–343 enclose the B5 domain; it reads FLHKIQNVRE…MSIGYNNLEP (76 aa). Mg(2+) contacts are provided by aspartate 321, aspartate 327, glutamate 330, and aspartate 331.

Belongs to the phenylalanyl-tRNA synthetase beta subunit family. Type 2 subfamily. In terms of assembly, tetramer of two alpha and two beta subunits. Mg(2+) is required as a cofactor.

Its subcellular location is the cytoplasm. The catalysed reaction is tRNA(Phe) + L-phenylalanine + ATP = L-phenylalanyl-tRNA(Phe) + AMP + diphosphate + H(+). This is Phenylalanine--tRNA ligase beta subunit from Saccharolobus islandicus (strain Y.N.15.51 / Yellowstone #2) (Sulfolobus islandicus).